The primary structure comprises 142 residues: Group IIE secretory phospholipase A2 (142 aa).

The signal sequence occupies residues 1 to 19 (MKPPIALACLCLLVPLAGG). Asp-41, Gly-43, Tyr-45, Gly-47, and Gly-49 together coordinate Ca(2+). Intrachain disulfides connect Cys-44-Cys-135, Cys-46-Cys-62, Cys-61-Cys-115, Cys-67-Cys-142, Cys-68-Cys-108, Cys-77-Cys-101, and Cys-95-Cys-106. His-65 is an active-site residue. Asp-66 lines the Ca(2+) pocket. Residue Asp-109 is part of the active site. The Ca(2+) site is built by Tyr-130 and Asn-132.

The protein belongs to the phospholipase A2 family. The cofactor is Ca(2+). Highly expressed in skin and uterus, and at lower levels in various other tissues. Expressed in hair follicles, specifically localized in companion cells of the outer root sheath and cuticular cells of the inner root sheath in hair follicles during anagen. Expressed in white and brown adipose tissue.

The protein localises to the secreted. It is found in the cytoplasm. The catalysed reaction is a 1,2-diacyl-sn-glycero-3-phosphoethanolamine + H2O = a 1-acyl-sn-glycero-3-phosphoethanolamine + a fatty acid + H(+). It catalyses the reaction 1-hexadecanoyl-2-(9Z-octadecenoyl)-sn-glycero-3-phosphoethanolamine + H2O = 1-hexadecanoyl-sn-glycero-3-phosphoethanolamine + (9Z)-octadecenoate + H(+). It carries out the reaction 1-hexadecanoyl-2-(9Z,12Z-octadecadienoyl)-sn-glycero-3-phosphoethanolamine + H2O = 1-hexadecanoyl-sn-glycero-3-phosphoethanolamine + (9Z,12Z)-octadecadienoate + H(+). The enzyme catalyses 1-hexadecanoyl-2-(5Z,8Z,11Z,14Z-eicosatetraenoyl)-sn-glycero-3-phosphoethanolamine + H2O = 1-hexadecanoyl-sn-glycero-3-phosphoethanolamine + (5Z,8Z,11Z,14Z)-eicosatetraenoate + H(+). The catalysed reaction is 1,2-dihexadecanoyl-sn-glycero-3-phospho-(1'-sn-glycerol) + H2O = 1-hexadecanoyl-sn-glycero-3-phospho-(1'-sn-glycerol) + hexadecanoate + H(+). It catalyses the reaction 1-hexadecanoyl-2-(9Z-octadecenoyl)-sn-glycero-3-phosphoglycerol + H2O = 1-hexadecanoyl-sn-glycero-3-phosphoglycerol + (9Z)-octadecenoate + H(+). It carries out the reaction a 1,2-diacyl-sn-glycero-3-phosphocholine + H2O = a 1-acyl-sn-glycero-3-phosphocholine + a fatty acid + H(+). The enzyme catalyses 1,2-dihexadecanoyl-sn-glycero-3-phosphocholine + H2O = 1-hexadecanoyl-sn-glycero-3-phosphocholine + hexadecanoate + H(+). The catalysed reaction is 1-hexadecanoyl-2-(9Z-octadecenoyl)-sn-glycero-3-phosphocholine + H2O = 1-hexadecanoyl-sn-glycero-3-phosphocholine + (9Z)-octadecenoate + H(+). It catalyses the reaction 1-hexadecanoyl-2-(9Z,12Z-octadecadienoyl)-sn-glycero-3-phosphocholine + H2O = (9Z,12Z)-octadecadienoate + 1-hexadecanoyl-sn-glycero-3-phosphocholine + H(+). It carries out the reaction 1-hexadecanoyl-2-(4Z,7Z,10Z,13Z,16Z,19Z-docosahexaenoyl)-sn-glycero-3-phosphocholine + H2O = (4Z,7Z,10Z,13Z,16Z,19Z)-docosahexaenoate + 1-hexadecanoyl-sn-glycero-3-phosphocholine + H(+). Its function is as follows. Secretory calcium-dependent phospholipase A2 that primarily targets extracellular phospholipids. Hydrolyzes the ester bond of the fatty acyl group attached at sn-2 position of phospholipids (phospholipase A2 activity), releasing various unsaturated fatty acids including oleoate, linoleoate, arachidonate, docosahexaenoate and lysophosphatidylethanolamines in preference to lysophosphatidylcholines. In response to high-fat diet, hydrolyzes minor lipoprotein phospholipids including phosphatidylserines, phosphatidylinositols and phosphatidylglycerols, altering lipoprotein composition and fat storage in adipose tissue and liver. May act in an autocrine and paracrine manner. Contributes to lipid remodeling of cellular membranes and generation of lipid mediators involved in pathogen clearance. Cleaves sn-2 fatty acyl chains of phosphatidylglycerols and phosphatidylethanolamines, which are major components of membrane phospholipids in bacteria. Acts as a hair follicle phospholipase A2. Selectively releases lysophosphatidylethanolamines (LPE) and various unsaturated fatty acids in skin to regulate hair follicle homeostasis. May regulate the inflammatory response by releasing arachidonate, a precursor of prostaglandins and leukotrienes. Upon allergen exposure, may participate in allergic inflammatory response by enhancing leukotriene C4 synthesis and degranulation in mast cells. The protein is Group IIE secretory phospholipase A2 (Pla2g2e) of Mus musculus (Mouse).